Reading from the N-terminus, the 206-residue chain is MLMLFLTVAMVHIVALMSPGPDFFFVSQTAVSRSRKEAMMGVLGITCGVMVWAGIALLGLHLIIEKMAWLHTLIMVGGGLYLCWMGYQMLRGALKKEAVSAPAPQVELAKSGRSFLKGLLTNLANPKAIIYFGSVFSLFVGDNVGTTARWGIFALIIVETLAWFTVVASLFALPQMRRGYQRLAKWIDGFAGALFAGFGIHLIISR.

A helical membrane pass occupies residues 1-21; it reads MLMLFLTVAMVHIVALMSPGP. Over 22–43 the chain is Periplasmic; the sequence is DFFFVSQTAVSRSRKEAMMGVL. Residues 44–64 form a helical membrane-spanning segment; sequence GITCGVMVWAGIALLGLHLII. The Cytoplasmic segment spans residues 65-66; sequence EK. The chain crosses the membrane as a helical span at residues 67 to 87; the sequence is MAWLHTLIMVGGGLYLCWMGY. Residues 88–149 are Periplasmic-facing; sequence QMLRGALKKE…VGDNVGTTAR (62 aa). A helical membrane pass occupies residues 150-173; that stretch reads WGIFALIIVETLAWFTVVASLFAL. Residues 174 to 206 lie on the Cytoplasmic side of the membrane; that stretch reads PQMRRGYQRLAKWIDGFAGALFAGFGIHLIISR.

It belongs to the Rht family.

Its subcellular location is the cell inner membrane. In terms of biological role, conducts the efflux of threonine. This is Threonine efflux protein (rhtC) from Escherichia coli O157:H7.